Reading from the N-terminus, the 419-residue chain is S-adenosylmethionine synthase (419 aa).

His-15 contacts ATP. Mg(2+) is bound at residue Asp-17. Glu-43 is a binding site for K(+). L-methionine is bound by residues Glu-56 and Gln-99. Positions 99–109 (QSPEIAQGVSC) are flexible loop. Residues 173-175 (DGK), 253-254 (RF), Asp-262, 268-269 (RK), Ala-285, and Lys-289 contribute to the ATP site. Asp-262 serves as a coordination point for L-methionine. Lys-293 lines the L-methionine pocket.

This sequence belongs to the AdoMet synthase family. Homotetramer; dimer of dimers. Mg(2+) serves as cofactor. It depends on K(+) as a cofactor.

The protein resides in the cytoplasm. It carries out the reaction L-methionine + ATP + H2O = S-adenosyl-L-methionine + phosphate + diphosphate. The protein operates within amino-acid biosynthesis; S-adenosyl-L-methionine biosynthesis; S-adenosyl-L-methionine from L-methionine: step 1/1. Functionally, catalyzes the formation of S-adenosylmethionine (AdoMet) from methionine and ATP. The overall synthetic reaction is composed of two sequential steps, AdoMet formation and the subsequent tripolyphosphate hydrolysis which occurs prior to release of AdoMet from the enzyme. This Gloeobacter violaceus (strain ATCC 29082 / PCC 7421) protein is S-adenosylmethionine synthase.